We begin with the raw amino-acid sequence, 127 residues long: Fluoride-specific ion channel FluC (127 aa).

The next 4 helical transmembrane spans lie at 4-24 (LDYL…YLVS), 39-59 (GTII…FAAI), 68-88 (AILF…TFTY), and 102-122 (VAYA…GMIL). Residues glycine 78 and threonine 81 each coordinate Na(+).

This sequence belongs to the fluoride channel Fluc/FEX (TC 1.A.43) family.

It is found in the cell inner membrane. It carries out the reaction fluoride(in) = fluoride(out). Its activity is regulated as follows. Na(+) is not transported, but it plays an essential structural role and its presence is essential for fluoride channel function. Fluoride-specific ion channel. Important for reducing fluoride concentration in the cell, thus reducing its toxicity. The polypeptide is Fluoride-specific ion channel FluC (Thermotoga maritima (strain ATCC 43589 / DSM 3109 / JCM 10099 / NBRC 100826 / MSB8)).